The chain runs to 252 residues: 3-deoxy-manno-octulosonate cytidylyltransferase 2 (252 aa).

This sequence belongs to the KdsB family.

The protein resides in the cytoplasm. The enzyme catalyses 3-deoxy-alpha-D-manno-oct-2-ulosonate + CTP = CMP-3-deoxy-beta-D-manno-octulosonate + diphosphate. It functions in the pathway nucleotide-sugar biosynthesis; CMP-3-deoxy-D-manno-octulosonate biosynthesis; CMP-3-deoxy-D-manno-octulosonate from 3-deoxy-D-manno-octulosonate and CTP: step 1/1. The protein operates within bacterial outer membrane biogenesis; lipopolysaccharide biosynthesis. Activates KDO (a required 8-carbon sugar) for incorporation into bacterial lipopolysaccharide in Gram-negative bacteria. The polypeptide is 3-deoxy-manno-octulosonate cytidylyltransferase 2 (Actinobacillus pleuropneumoniae serotype 5b (strain L20)).